The following is a 284-amino-acid chain: uncharacterized protein (284 aa).

The next 3 helical transmembrane spans lie at 174–194 (LFVL…YISI), 217–237 (MLIP…PGTA), and 241–261 (LIVL…SGSC).

The protein localises to the membrane. This is an uncharacterized protein from Saccharomyces cerevisiae (strain ATCC 204508 / S288c) (Baker's yeast).